Here is a 280-residue protein sequence, read N- to C-terminus: Acetyl-coenzyme A carboxylase carboxyl transferase subunit beta (280 aa).

The region spanning 26–280 is the CoA carboxyltransferase N-terminal domain; the sequence is LWQKCPRCGE…TKLLAWHSQK (255 aa). Residues cysteine 30, cysteine 33, cysteine 49, and cysteine 52 each coordinate Zn(2+). Residues 30 to 52 form a C4-type zinc finger; that stretch reads CPRCGEIIFNKELEKNFKVCPKC.

This sequence belongs to the AccD/PCCB family. As to quaternary structure, acetyl-CoA carboxylase is a heterohexamer composed of biotin carboxyl carrier protein (AccB), biotin carboxylase (AccC) and two subunits each of ACCase subunit alpha (AccA) and ACCase subunit beta (AccD). Requires Zn(2+) as cofactor.

The protein localises to the cytoplasm. The catalysed reaction is N(6)-carboxybiotinyl-L-lysyl-[protein] + acetyl-CoA = N(6)-biotinyl-L-lysyl-[protein] + malonyl-CoA. Its pathway is lipid metabolism; malonyl-CoA biosynthesis; malonyl-CoA from acetyl-CoA: step 1/1. Component of the acetyl coenzyme A carboxylase (ACC) complex. Biotin carboxylase (BC) catalyzes the carboxylation of biotin on its carrier protein (BCCP) and then the CO(2) group is transferred by the transcarboxylase to acetyl-CoA to form malonyl-CoA. The polypeptide is Acetyl-coenzyme A carboxylase carboxyl transferase subunit beta (Carboxydothermus hydrogenoformans (strain ATCC BAA-161 / DSM 6008 / Z-2901)).